The following is an 80-amino-acid chain: uncharacterized protein (80 aa).

It to M.leprae U650M.

This is an uncharacterized protein from Mycobacterium bovis (strain ATCC BAA-935 / AF2122/97).